Consider the following 244-residue polypeptide: 5'-nucleotidase SurE 2 (244 aa).

A divalent metal cation contacts are provided by Asp8, Asp9, Ser39, and Asn96.

It belongs to the SurE nucleotidase family. Requires a divalent metal cation as cofactor.

The protein resides in the cytoplasm. It carries out the reaction a ribonucleoside 5'-phosphate + H2O = a ribonucleoside + phosphate. In terms of biological role, nucleotidase that shows phosphatase activity on nucleoside 5'-monophosphates. The sequence is that of 5'-nucleotidase SurE 2 from Thermus thermophilus (strain ATCC BAA-163 / DSM 7039 / HB27).